A 590-amino-acid chain; its full sequence is Proline--tRNA ligase (590 aa).

Belongs to the class-II aminoacyl-tRNA synthetase family. ProS type 1 subfamily. Homodimer.

It localises to the cytoplasm. It carries out the reaction tRNA(Pro) + L-proline + ATP = L-prolyl-tRNA(Pro) + AMP + diphosphate. Functionally, catalyzes the attachment of proline to tRNA(Pro) in a two-step reaction: proline is first activated by ATP to form Pro-AMP and then transferred to the acceptor end of tRNA(Pro). As ProRS can inadvertently accommodate and process non-cognate amino acids such as alanine and cysteine, to avoid such errors it has two additional distinct editing activities against alanine. One activity is designated as 'pretransfer' editing and involves the tRNA(Pro)-independent hydrolysis of activated Ala-AMP. The other activity is designated 'posttransfer' editing and involves deacylation of mischarged Ala-tRNA(Pro). The misacylated Cys-tRNA(Pro) is not edited by ProRS. The protein is Proline--tRNA ligase of Leifsonia xyli subsp. xyli (strain CTCB07).